The sequence spans 890 residues: Phosphotransferase RcsD (890 aa).

Topologically, residues 1 to 21 are cytoplasmic; the sequence is MRQKETTATTRFSLLPGSITR. A helical membrane pass occupies residues 22–42; it reads FFLLLIIVLLVTMGVMVQSAV. At 43–308 the chain is on the periplasmic side; the sequence is NAWLKDKSYQ…GTLLLDTLQN (266 aa). Residues 309–329 form a helical membrane-spanning segment; sequence ILLPLLLNIGLLALALFGYTT. The Cytoplasmic segment spans residues 330-890; it reads FRHFSSRSTE…DIDSYVKSLL (561 aa). Positions 468 to 678 are histidine-like kinase; it reads NIGDALKEPA…RYSVHIKMLA (211 aa). The HPt domain occupies 803 to 890; that stretch reads AQLHASGYYA…DIDSYVKSLL (88 aa). Histidine 842 bears the Phosphohistidine mark.

Belongs to the RcsD family. Interacts with RcsC and RcsB. Has a higher affinity for RcsB than for RcsC. Post-translationally, phosphorylated by RcsC.

Its subcellular location is the cell inner membrane. Component of the Rcs signaling system, which controls transcription of numerous genes. RcsD is a phosphotransfer intermediate between the sensor kinase RcsC and the response regulator RcsB. It acquires a phosphoryl group from RcsC and transfers it to RcsB. The system controls expression of genes involved in colanic acid capsule synthesis, biofilm formation and cell division. The chain is Phosphotransferase RcsD from Escherichia coli (strain K12).